The chain runs to 296 residues: tRNA dimethylallyltransferase (296 aa).

ATP is bound at residue Gly-2 to Thr-9. Substrate is bound at residue Thr-4–Thr-9. Interaction with substrate tRNA regions lie at residues Asp-27–Leu-30, Gln-151–Arg-155, and Arg-232–Arg-237.

This sequence belongs to the IPP transferase family. In terms of assembly, monomer. Requires Mg(2+) as cofactor.

The catalysed reaction is adenosine(37) in tRNA + dimethylallyl diphosphate = N(6)-dimethylallyladenosine(37) in tRNA + diphosphate. Functionally, catalyzes the transfer of a dimethylallyl group onto the adenine at position 37 in tRNAs that read codons beginning with uridine, leading to the formation of N6-(dimethylallyl)adenosine (i(6)A). The sequence is that of tRNA dimethylallyltransferase from Shewanella pealeana (strain ATCC 700345 / ANG-SQ1).